Consider the following 352-residue polypeptide: MERNVVIRLENVTKSFDDQVVLKNLTLDVRKNEFLTLLGPSGCGKTTTLRLIGGFEKPDEGIILHHGNDISNLPPYKRNVNTVFQKYALFPHLNVYENIAFGLKIKKMNKSLIKEKVEKALRQVNLVGYENRRIDQLSGGQQQRVAIARAIVNEPEILLLDEPLGALDLKLRQEMQYELKTLQKELGITFVYVTHDQEEALTMSDTVVVMNNGVIQQKGTPEDIYNEPVNAFVADFIGESNIVEGIMRQDGVVEIFGRVYECVDKGFAVNEKVDVVIRPEDIKLLEPSENKINGQVTSCIFKGVHYETCVMTDGFEWVIHNTKSFTPGENVSINVDPFDIHIMKKMEKEAGT.

One can recognise an ABC transporter domain in the interval 7 to 237 (IRLENVTKSF…PVNAFVADFI (231 aa)). 39-46 (GPSGCGKT) is an ATP binding site.

Belongs to the ABC transporter superfamily. Spermidine/putrescine importer (TC 3.A.1.11.1) family. As to quaternary structure, the complex is composed of two ATP-binding proteins (PotA), two transmembrane proteins (PotB and PotC) and a solute-binding protein (PotD).

Its subcellular location is the cell membrane. It catalyses the reaction ATP + H2O + polyamine-[polyamine-binding protein]Side 1 = ADP + phosphate + polyamineSide 2 + [polyamine-binding protein]Side 1.. Functionally, part of the ABC transporter complex PotABCD involved in spermidine/putrescine import. Responsible for energy coupling to the transport system. The protein is Spermidine/putrescine import ATP-binding protein PotA of Acetivibrio thermocellus (strain ATCC 27405 / DSM 1237 / JCM 9322 / NBRC 103400 / NCIMB 10682 / NRRL B-4536 / VPI 7372) (Clostridium thermocellum).